A 94-amino-acid polypeptide reads, in one-letter code: Acylphosphatase (94 aa).

Positions 6–92 (RVHVWIRGRV…EGLPTFEIRP (87 aa)) constitute an Acylphosphatase-like domain. Active-site residues include Arg-21 and Asn-39.

This sequence belongs to the acylphosphatase family.

It catalyses the reaction an acyl phosphate + H2O = a carboxylate + phosphate + H(+). The chain is Acylphosphatase (acyP) from Synechococcus sp. (strain JA-2-3B'a(2-13)) (Cyanobacteria bacterium Yellowstone B-Prime).